Consider the following 108-residue polypeptide: UPF0235 protein RB8260 (108 aa).

This sequence belongs to the UPF0235 family.

This Rhodopirellula baltica (strain DSM 10527 / NCIMB 13988 / SH1) protein is UPF0235 protein RB8260.